The sequence spans 213 residues: Pyrrolidone-carboxylate peptidase (213 aa).

Residues E78, C141, and H165 contribute to the active site.

It belongs to the peptidase C15 family. Homotetramer.

The protein resides in the cytoplasm. The enzyme catalyses Release of an N-terminal pyroglutamyl group from a polypeptide, the second amino acid generally not being Pro.. Removes 5-oxoproline from various penultimate amino acid residues except L-proline. The protein is Pyrrolidone-carboxylate peptidase of Clostridium perfringens (strain ATCC 13124 / DSM 756 / JCM 1290 / NCIMB 6125 / NCTC 8237 / Type A).